A 758-amino-acid chain; its full sequence is Protein SPT21 (758 aa).

Disordered stretches follow at residues 251-271 (NNTNSGTVGRRQTNPMPAPKA), 372-414 (ININ…AGCR), 438-471 (GIEGQKLQQKQKGRKISLTSENDKENIPPQSITS), and 624-651 (VIDSDNTKPQAGLINFSTPADQPASDNN). Residues 395 to 408 (VKVKNSNSKNSAKS) show a composition bias toward low complexity. Ser-454 is modified (phosphoserine). Over residues 626–651 (DSDNTKPQAGLINFSTPADQPASDNN) the composition is skewed to polar residues.

Required for normal transcription at a number of loci in yeast. This is Protein SPT21 (SPT21) from Saccharomyces cerevisiae (strain ATCC 204508 / S288c) (Baker's yeast).